We begin with the raw amino-acid sequence, 340 residues long: MNAPSFTGLPTSMLSVKMICSECREDPPNLVEEFSSGDTVCGSCGLVLGDRIIDTRSEWRTFSNSDEASGDPSRVGKVANPLLNGSQLDTTISSYDGAGAMLAKAQGRSVQVRGEKNLLTAYKEIGAMCDAISLPKVIADTAKQLYKRVDDHKALKGKSSQSIIAACIYIACRQGKVPRTFMEICTLTNVPKKEIGRVYKTLQRMLTEGGALHNSVDALKGHEYIQSSSTSAEDLMVRFCNRLMLPMSVQSAAAELARRAGLQGTLAGRSPISIAASGIYMISALMGYPKTPKEISEVTGVSDSTIRIAYKLLHAERKELIDPKWIANKAGNMDAMLPKP.

The segment at 16–49 adopts a TFIIB-type zinc-finger fold; the sequence is VKMICSECREDPPNLVEEFSSGDTVCGSCGLVLG. Residues Cys20, Cys23, Cys41, and Cys44 each coordinate Zn(2+). 2 tandem repeats follow at residues 128 to 204 and 239 to 315.

It belongs to the TFIIB family. In terms of assembly, associates with TFIID-IIA (DA complex) to form TFIID-IIA-IIB (DAB-complex) which is then recognized by polymerase II.

The protein localises to the nucleus. In terms of biological role, general factor that plays a major role in the activation of eukaryotic genes transcribed by RNA polymerase II. The protein is Transcription initiation factor IIB (sua7) of Schizosaccharomyces pombe (strain 972 / ATCC 24843) (Fission yeast).